The primary structure comprises 291 residues: Small ribosomal subunit biogenesis GTPase RsgA (291 aa).

The CP-type G domain occupies 63–221 (NNELKRPPVS…IADTPGFSAL (159 aa)). Residues 112–115 (TKHD) and 164–172 (GQSGVGKST) contribute to the GTP site. Residues Cys-245, Cys-250, His-252, and Cys-258 each coordinate Zn(2+).

This sequence belongs to the TRAFAC class YlqF/YawG GTPase family. RsgA subfamily. In terms of assembly, monomer. Associates with 30S ribosomal subunit, binds 16S rRNA. Zn(2+) is required as a cofactor.

The protein resides in the cytoplasm. Functionally, one of several proteins that assist in the late maturation steps of the functional core of the 30S ribosomal subunit. Helps release RbfA from mature subunits. May play a role in the assembly of ribosomal proteins into the subunit. Circularly permuted GTPase that catalyzes slow GTP hydrolysis, GTPase activity is stimulated by the 30S ribosomal subunit. This is Small ribosomal subunit biogenesis GTPase RsgA from Staphylococcus epidermidis (strain ATCC 12228 / FDA PCI 1200).